The primary structure comprises 473 residues: Aspartyl/glutamyl-tRNA(Asn/Gln) amidotransferase subunit B (473 aa).

Belongs to the GatB/GatE family. GatB subfamily. In terms of assembly, heterotrimer of A, B and C subunits.

The enzyme catalyses L-glutamyl-tRNA(Gln) + L-glutamine + ATP + H2O = L-glutaminyl-tRNA(Gln) + L-glutamate + ADP + phosphate + H(+). It carries out the reaction L-aspartyl-tRNA(Asn) + L-glutamine + ATP + H2O = L-asparaginyl-tRNA(Asn) + L-glutamate + ADP + phosphate + 2 H(+). Allows the formation of correctly charged Asn-tRNA(Asn) or Gln-tRNA(Gln) through the transamidation of misacylated Asp-tRNA(Asn) or Glu-tRNA(Gln) in organisms which lack either or both of asparaginyl-tRNA or glutaminyl-tRNA synthetases. The reaction takes place in the presence of glutamine and ATP through an activated phospho-Asp-tRNA(Asn) or phospho-Glu-tRNA(Gln). The chain is Aspartyl/glutamyl-tRNA(Asn/Gln) amidotransferase subunit B from Wolbachia pipientis subsp. Culex pipiens (strain wPip).